Consider the following 173-residue polypeptide: MAGALRKMAVYLGLVEDDRYDHRYADEYDDFEDFDEPLDERPSRNRSPRDDSRNNAVTDSSDHSPSRNERRSPAPAPATADLARITTLHPRTYNEARTIGEHFREGIPVIMNLTEMVDSDAKRLVDFAAGLIFGLHGSIERVTNKVFLLSPANVEVTAEDKARIAERGFFNQS.

Positions 31–82 are disordered; the sequence is FEDFDEPLDERPSRNRSPRDDSRNNAVTDSSDHSPSRNERRSPAPAPATADL. Composition is skewed to basic and acidic residues over residues 39 to 53 and 60 to 72; these read DERP…DDSR and SSDH…ERRS.

The protein belongs to the SepF family. As to quaternary structure, homodimer. Interacts with FtsZ.

It localises to the cytoplasm. Functionally, cell division protein that is part of the divisome complex and is recruited early to the Z-ring. Probably stimulates Z-ring formation, perhaps through the cross-linking of FtsZ protofilaments. Its function overlaps with FtsA. In Thermobifida fusca (strain YX), this protein is Cell division protein SepF.